A 503-amino-acid polypeptide reads, in one-letter code: uncharacterized protein (503 aa).

The next 12 membrane-spanning stretches (helical) occupy residues 20 to 40 (FIAF…VLTM), 43 to 63 (LGPF…GVML), 106 to 126 (VSLT…LSFA), 138 to 158 (LIGL…ISLF), 166 to 186 (AILF…ILGI), 215 to 235 (VIST…LTAI), 249 to 269 (LLMF…ISGI), 301 to 321 (YLGI…SLAS), 359 to 379 (VWAS…VPFL), 405 to 425 (LAVL…FMIL), 443 to 463 (GVSF…ITAW), and 468 to 488 (TFKL…FIHS).

It to M.genitalium MG225.

It is found in the cell membrane. This is an uncharacterized protein from Mycoplasma pneumoniae (strain ATCC 29342 / M129 / Subtype 1) (Mycoplasmoides pneumoniae).